The primary structure comprises 164 residues: Thiol peroxidase (164 aa).

Residues 18-163 enclose the Thioredoxin domain; the sequence is INEGDFAPDF…FDAALAAYKN (146 aa). The active-site Cysteine sulfenic acid (-SOH) intermediate is the C60. C60 and C93 are oxidised to a cystine.

The protein belongs to the peroxiredoxin family. Tpx subfamily. Homodimer.

It carries out the reaction a hydroperoxide + [thioredoxin]-dithiol = an alcohol + [thioredoxin]-disulfide + H2O. In terms of biological role, thiol-specific peroxidase that catalyzes the reduction of hydrogen peroxide and organic hydroperoxides to water and alcohols, respectively. Plays a role in cell protection against oxidative stress by detoxifying peroxides. The protein is Thiol peroxidase of Staphylococcus aureus (strain Mu50 / ATCC 700699).